The sequence spans 577 residues: Protein CBFA2T1 (577 aa).

The segment covering 1 to 10 (MPDRTEKHST) has biased composition (basic and acidic residues). The disordered stretch occupies residues 1–87 (MPDRTEKHST…SSSSLANQQL (87 aa)). Ser-14 is modified (phosphoserine). The span at 42 to 59 (SSFTPTTLTNGTSHSPTA) shows a compositional bias: polar residues. The segment covering 68-87 (NGFSNGPSSSSSSSLANQQL) has biased composition (low complexity). A TAFH domain is found at 93–188 (ARQLSKLKRF…NPAQYLAQHE (96 aa)). A disordered region spans residues 203–271 (SELLLDVNEN…LPHPTPPPPQ (69 aa)). Basic and acidic residues predominate over residues 211–237 (ENGKRRTPDRTKENGFDREPLHSEHPS). Positions 244–258 (SPGQRYSPNNGLSYQ) are enriched in polar residues. Over residues 262-271 (LPHPTPPPPQ) the composition is skewed to pro residues. The tract at residues 310–356 (QEEMIDHRLTDREWAEEWKHLDHLLNCIMDMVEKTRRSLTVLRRCQE) is important for oligomerization. Residues 310-356 (QEEMIDHRLTDREWAEEWKHLDHLLNCIMDMVEKTRRSLTVLRRCQE) are nervy homology region 2 (NHR2). The tract at residues 374 to 396 (DLKKGGSSSSSHSRQQSPVNPDP) is disordered. Over residues 380–390 (SSSSSHSRQQS) the composition is skewed to low complexity. At Ser-390 the chain carries Phosphoserine. Residues 416 to 465 (EEIWKKAEEAVNEVKRQAMTELQKAVSEAERKAHDMITTERAKMERTVAE) are nervy homology region 3 (NHR3). Residues Cys-488, Cys-491, Cys-499, Cys-502, Cys-508, Cys-512, His-520, and Cys-524 each contribute to the Zn(2+) site. The MYND-type zinc-finger motif lies at 488–524 (CWNCGRKASETCSGCNTARYCGSFCQHKDWEKHHHIC). The interval 529–577 (QAPQQGDTPAVSSSVTPSSGAGSPMDTPPAATPRSTTPGTPSTIETTPR) is disordered. 2 stretches are compositionally biased toward low complexity: residues 536–553 (TPAVSSSVTPSSGAGSPM) and 560–577 (TPRSTTPGTPSTIETTPR).

Belongs to the CBFA2T family. In terms of assembly, homotetramer. Heterotetramer with CBFA2T2 and CBFA2T3. Interacts with TCF12, SIN3A, HDAC1, HDAC2, HDAC3, NCOR1 and NCOR2. Interacts with ATN1 (via its N-terminus); the interaction enhances the transcriptional repression.

Its subcellular location is the nucleus. Its function is as follows. Transcriptional corepressor which facilitates transcriptional repression via its association with DNA-binding transcription factors and recruitment of other corepressors and histone-modifying enzymes. Can repress the expression of MMP7 in a ZBTB33-dependent manner. Can repress transactivation mediated by TCF12. Acts as a negative regulator of adipogenesis. The chain is Protein CBFA2T1 (Runx1t1) from Mus musculus (Mouse).